A 137-amino-acid chain; its full sequence is Small ribosomal subunit protein uS9 (137 aa).

The segment covering 105–117 (LKVEGYLTRDPRA) has biased composition (basic and acidic residues). The tract at residues 105 to 137 (LKVEGYLTRDPRAKERKKYGLRKARKAPQYSKR) is disordered. Residues 118 to 137 (KERKKYGLRKARKAPQYSKR) are compositionally biased toward basic residues.

It belongs to the universal ribosomal protein uS9 family.

In Cyanothece sp. (strain PCC 7425 / ATCC 29141), this protein is Small ribosomal subunit protein uS9.